A 149-amino-acid chain; its full sequence is Large ribosomal subunit protein uL13 (149 aa).

Belongs to the universal ribosomal protein uL13 family. As to quaternary structure, part of the 50S ribosomal subunit.

Its function is as follows. This protein is one of the early assembly proteins of the 50S ribosomal subunit, although it is not seen to bind rRNA by itself. It is important during the early stages of 50S assembly. The chain is Large ribosomal subunit protein uL13 from Thermobifida fusca (strain YX).